The chain runs to 363 residues: tRNA-specific 2-thiouridylase MnmA (363 aa).

ATP is bound by residues 8 to 15 and L34; that span reads AMSGGVDS. The Nucleophile role is filled by C103. A disulfide bridge links C103 with C195. An ATP-binding site is contributed by G127. Positions 145 to 147 are interaction with tRNA; sequence KDQ. The active-site Cysteine persulfide intermediate is C195.

It belongs to the MnmA/TRMU family.

It localises to the cytoplasm. The enzyme catalyses S-sulfanyl-L-cysteinyl-[protein] + uridine(34) in tRNA + AH2 + ATP = 2-thiouridine(34) in tRNA + L-cysteinyl-[protein] + A + AMP + diphosphate + H(+). Its function is as follows. Catalyzes the 2-thiolation of uridine at the wobble position (U34) of tRNA, leading to the formation of s(2)U34. This chain is tRNA-specific 2-thiouridylase MnmA, found in Thermobifida fusca (strain YX).